Reading from the N-terminus, the 346-residue chain is N-acetyl-gamma-glutamyl-phosphate reductase (346 aa).

Residue Cys-150 is part of the active site.

It belongs to the NAGSA dehydrogenase family. Type 1 subfamily.

The protein resides in the cytoplasm. The enzyme catalyses N-acetyl-L-glutamate 5-semialdehyde + phosphate + NADP(+) = N-acetyl-L-glutamyl 5-phosphate + NADPH + H(+). It participates in amino-acid biosynthesis; L-arginine biosynthesis; N(2)-acetyl-L-ornithine from L-glutamate: step 3/4. Catalyzes the NADPH-dependent reduction of N-acetyl-5-glutamyl phosphate to yield N-acetyl-L-glutamate 5-semialdehyde. This chain is N-acetyl-gamma-glutamyl-phosphate reductase, found in Moorella thermoacetica (strain ATCC 39073 / JCM 9320).